Here is a 320-residue protein sequence, read N- to C-terminus: Methionyl-tRNA formyltransferase (320 aa).

Residue 117–120 (SLLP) participates in (6S)-5,6,7,8-tetrahydrofolate binding.

This sequence belongs to the Fmt family.

The enzyme catalyses L-methionyl-tRNA(fMet) + (6R)-10-formyltetrahydrofolate = N-formyl-L-methionyl-tRNA(fMet) + (6S)-5,6,7,8-tetrahydrofolate + H(+). In terms of biological role, attaches a formyl group to the free amino group of methionyl-tRNA(fMet). The formyl group appears to play a dual role in the initiator identity of N-formylmethionyl-tRNA by promoting its recognition by IF2 and preventing the misappropriation of this tRNA by the elongation apparatus. The protein is Methionyl-tRNA formyltransferase of Bordetella petrii (strain ATCC BAA-461 / DSM 12804 / CCUG 43448).